A 484-amino-acid chain; its full sequence is GTPase Obg (484 aa).

The Obg domain occupies 7-164 (PRFVDRVVIH…RDLTLELKTV (158 aa)). Residues 21-43 (SGGNGCASVHREKFKPLGGPDGG) are disordered. Residues 165 to 345 (ADVGLVGFPS…LIFGLSQMIS (181 aa)) form the OBG-type G domain. GTP-binding positions include 171 to 178 (GFPSAGKS), 196 to 200 (FTTLV), 217 to 220 (DVPG), 297 to 300 (NKID), and 326 to 328 (STA). Residues serine 178 and threonine 198 each contribute to the Mg(2+) site. Residues 363-441 (PIPVDDSGFT…IGEMTFDWEP (79 aa)) enclose the OCT domain. The interval 439 to 484 (WEPQTPAGEPVAMSGRGTDPRLDSNKRVGAAERKAARSRRREHGDG) is disordered. Residues 456–473 (TDPRLDSNKRVGAAERKA) are compositionally biased toward basic and acidic residues. Over residues 474 to 484 (ARSRRREHGDG) the composition is skewed to basic residues.

It belongs to the TRAFAC class OBG-HflX-like GTPase superfamily. OBG GTPase family. Monomer. Mg(2+) is required as a cofactor.

The protein resides in the cytoplasm. Its function is as follows. An essential GTPase which binds GTP, GDP and possibly (p)ppGpp with moderate affinity, with high nucleotide exchange rates and a fairly low GTP hydrolysis rate. Plays a role in control of the cell cycle, stress response, ribosome biogenesis and in those bacteria that undergo differentiation, in morphogenesis control. This Mycobacterium tuberculosis (strain CDC 1551 / Oshkosh) protein is GTPase Obg.